A 433-amino-acid polypeptide reads, in one-letter code: Alpha-(1,3)-fucosyltransferase 4 (433 aa).

The segment at 1–20 (MAPAGRKLQHESRCRPSRPV) is disordered. The Cytoplasmic portion of the chain corresponds to 1–54 (MAPAGRKLQHESRCRPSRPVDAWRAAATTRGRCMGTPGARRTARRGGWGLPRTS). Residues 55 to 74 (SGLAAAGLLCTALTACLCWG) form a helical; Signal-anchor for type II membrane protein membrane-spanning segment. The Lumenal portion of the chain corresponds to 75-433 (QLPPLPWASP…IHNLADWFQR (359 aa)). N-linked (GlcNAc...) asparagine glycosylation is found at Asn117 and Asn218.

It belongs to the glycosyltransferase 10 family. In terms of tissue distribution, in adult, highest expression in spleen, testis, brain, lung, kidney and skeletal muscle and to a lesser extent in liver and heart.

The protein resides in the golgi apparatus. The protein localises to the golgi stack membrane. The catalysed reaction is a beta-D-galactosyl-(1-&gt;4)-N-acetyl-beta-D-glucosaminyl derivative + GDP-beta-L-fucose = a beta-D-galactosyl-(1-&gt;4)-[alpha-L-fucosyl-(1-&gt;3)]-N-acetyl-beta-D-glucosaminyl derivative + GDP + H(+). It catalyses the reaction an N-acetyl-alpha-neuraminyl-(2-&gt;3)-beta-D-galactosyl-(1-&gt;4)-N-acetyl-beta-D-glucosaminyl derivative + GDP-beta-L-fucose = an alpha-Neu5Ac-(2-&gt;3)-beta-D-Gal-(1-&gt;4)-[alpha-L-Fuc-(1-&gt;3)]-beta-D-GlcNAc derivative + GDP + H(+). It carries out the reaction an alpha-Neu5Ac-(2-&gt;3)-beta-D-Gal-(1-&gt;4)-beta-D-GlcNAc-(1-&gt;3)-beta-D-Gal-(1-&gt;4)-beta-D-GlcNAc derivative + GDP-beta-L-fucose = an alpha-Neu5Ac-(2-&gt;3)-beta-D-Gal-(1-&gt;4)-beta-D-GlcNAc-(1-&gt;3)-beta-D-Gal-(1-&gt;4)-[alpha-L-Fuc-(1-&gt;3)]-beta-D-GlcNAc derivative + GDP + H(+). The enzyme catalyses an alpha-Neu5Ac-(2-&gt;3)-beta-D-Gal-(1-&gt;4)-beta-D-GlcNAc6S derivative + GDP-beta-L-fucose = an alpha-Neu5Ac-(2-&gt;3)-beta-D-Gal-(1-&gt;4)-[alpha-L-Fuc-(1-&gt;3)]-beta-D-GlcNAc6S derivative + GDP + H(+). Its pathway is protein modification; protein glycosylation. In terms of biological role, catalyzes alpha(1-&gt;3) linkage of fucosyl moiety transferred from GDP-beta-L-fucose to N-acetyl glucosamine (GlcNAc) within type 2 lactosamine (LacNAc, Gal-beta(1-&gt;4)GlcNAc) glycan attached to N- or O-linked glycoproteins. Robustly fucosylates nonsialylated distal LacNAc unit of the polylactosamine chain to form Lewis X antigen (CD15), a glycan determinant known to mediate important cellular functions in development and immunity. Fucosylates with lower efficiency sialylated LacNAc acceptors to form sialyl Lewis X and 6-sulfo sialyl Lewis X determinants that serve as recognition epitopes for C-type lectins. Together with FUT7 contributes to SELE, SELL and SELP selectin ligand biosynthesis and selectin-dependent lymphocyte homing, leukocyte migration and blood leukocyte homeostasis. In a cell type specific manner, may also fucosylate the internal LacNAc unit of the polylactosamine chain to form VIM-2 antigen that serves as recognition epitope for SELE. This is Alpha-(1,3)-fucosyltransferase 4 (Fut4) from Rattus norvegicus (Rat).